Here is a 172-residue protein sequence, read N- to C-terminus: Protein-export protein SecB (172 aa).

The protein belongs to the SecB family. As to quaternary structure, homotetramer, a dimer of dimers. One homotetramer interacts with 1 SecA dimer.

It is found in the cytoplasm. Functionally, one of the proteins required for the normal export of preproteins out of the cell cytoplasm. It is a molecular chaperone that binds to a subset of precursor proteins, maintaining them in a translocation-competent state. It also specifically binds to its receptor SecA. This Haemophilus ducreyi (strain 35000HP / ATCC 700724) protein is Protein-export protein SecB.